The primary structure comprises 735 residues: Urea active transporter (735 aa).

The Cytoplasmic segment spans residues 1 to 14; it reads MGEFKPPLPQGAGY. Residues 15–35 form a helical membrane-spanning segment; sequence AIVLGLGAVFAGMMVLTTYLL. The Extracellular portion of the chain corresponds to 36 to 85; sequence KRYQKEIITAEEFTTAGRSVKTGLVAAAVVSSWIWCSTLLTSSTKEYADG. The helical transmembrane segment at 86-106 threads the bilayer; sequence IFGGYAYAAGACFQIIAFAIL. Residues 107-130 lie on the Cytoplasmic side of the membrane; it reads AIKTKQMAPNAHTYLELVRTRYGK. The helical transmembrane segment at 131–151 threads the bilayer; it reads IGHGCYLFYAIATNILVTSML. Over 152–166 the chain is Extracellular; sequence LTSGSAVFSDLTGMN. A helical transmembrane segment spans residues 167–187; it reads TIASCFLLPVGVVVYTLFGGI. The Cytoplasmic segment spans residues 188 to 189; the sequence is KA. A helical membrane pass occupies residues 190-210; the sequence is TFLTDYMHTCVIIIIVLVFAF. At 211–253 the chain is on the extracellular side; it reads KVYATSDVLGSPGKVYDLVREAAKRHPVDGNYQGEYMTMTSKS. Residues 254–274 traverse the membrane as a helical segment; it reads AGILLIINLIGNFGTVFLDNG. Over 275–295 the chain is Cytoplasmic; that stretch reads YWNKAISASPAASLKAYAIGG. The chain crosses the membrane as a helical span at residues 296–316; the sequence is LAWFAVPSLISLTMGLACLAV. The Extracellular segment spans residues 317–343; it reads ETSPNFPTYPDPLTSFQANSGLVLPAA. A helical membrane pass occupies residues 344–364; sequence AIAIMGKGGAVASLLMIFMAV. Residues 365 to 403 lie on the Cytoplasmic side of the membrane; it reads TSAMSAELIAVSSVFTYDIYREYIDPRASGKKLIYTSHV. The chain crosses the membrane as a helical span at residues 404-424; it reads ACIFFGLAMSGFSVGLYYGGI. Position 425 (Ser425) is a topological domain, extracellular. The chain crosses the membrane as a helical span at residues 426–446; it reads MGYIYEMMGIIISSAVLPVVL. At 447-454 the chain is on the cytoplasmic side; it reads TLCSKDMN. Residues 455–475 form a helical membrane-spanning segment; the sequence is LVAAVVSPILGTGLAIMSWLV. Topologically, residues 476-496 are extracellular; it reads CTKSLYKELTVDTTFMDYPML. Residues 497–517 form a helical membrane-spanning segment; it reads TGNLVALLSPAIFIPILTYVF. Residues 518–618 are Cytoplasmic-facing; that stretch reads KPQNFDWEKM…EQRELARGLK (101 aa). Residues 553 to 572 form a disordered region; the sequence is ANDKEQEEETNSLVSDSEKN. The chain crosses the membrane as a helical span at residues 619–639; sequence IAYFLCVFFALAFLVVWPMPM. At 640–650 the chain is on the extracellular side; that stretch reads YGSKYIFSKKF. A helical transmembrane segment spans residues 651–671; the sequence is FTGWVVVMIIWLFFSAFAVCI. Residues 672 to 735 lie on the Cytoplasmic side of the membrane; that stretch reads YPLWEGRHGI…SHFGQVDEII (64 aa).

The protein belongs to the sodium:solute symporter (SSF) (TC 2.A.21) family. As to quaternary structure, may polymerize.

The protein localises to the membrane. In terms of biological role, required for active transport of urea. The chain is Urea active transporter (DUR3) from Saccharomyces cerevisiae (strain ATCC 204508 / S288c) (Baker's yeast).